The primary structure comprises 478 residues: Cysteine--tRNA ligase (478 aa).

C29 is a binding site for Zn(2+). The 'HIGH' region motif lies at 31–41; it reads VTVYDYCHLGH. C213, H238, and E242 together coordinate Zn(2+). The 'KMSKS' region signature appears at 270-274; that stretch reads KMSKS. K273 contacts ATP.

Belongs to the class-I aminoacyl-tRNA synthetase family. In terms of assembly, monomer. It depends on Zn(2+) as a cofactor.

It is found in the cytoplasm. It carries out the reaction tRNA(Cys) + L-cysteine + ATP = L-cysteinyl-tRNA(Cys) + AMP + diphosphate. The polypeptide is Cysteine--tRNA ligase (Synechococcus sp. (strain ATCC 27144 / PCC 6301 / SAUG 1402/1) (Anacystis nidulans)).